The chain runs to 208 residues: UPF0637 protein BCAH820_3975 (208 aa).

The protein belongs to the UPF0637 family.

The protein is UPF0637 protein BCAH820_3975 of Bacillus cereus (strain AH820).